A 195-amino-acid polypeptide reads, in one-letter code: Imidazoleglycerol-phosphate dehydratase (195 aa).

This sequence belongs to the imidazoleglycerol-phosphate dehydratase family.

It localises to the cytoplasm. The enzyme catalyses D-erythro-1-(imidazol-4-yl)glycerol 3-phosphate = 3-(imidazol-4-yl)-2-oxopropyl phosphate + H2O. It participates in amino-acid biosynthesis; L-histidine biosynthesis; L-histidine from 5-phospho-alpha-D-ribose 1-diphosphate: step 6/9. The chain is Imidazoleglycerol-phosphate dehydratase from Endomicrobium trichonymphae.